The sequence spans 517 residues: Crotonobetaine/carnitine--CoA ligase (517 aa).

It belongs to the ATP-dependent AMP-binding enzyme family.

The catalysed reaction is 4-(trimethylamino)butanoate + ATP + CoA = 4-(trimethylamino)butanoyl-CoA + AMP + diphosphate. The enzyme catalyses crotonobetaine + ATP + CoA = crotonobetainyl-CoA + AMP + diphosphate. It carries out the reaction (R)-carnitine + ATP + CoA = (R)-carnitinyl-CoA + AMP + diphosphate. It functions in the pathway amine and polyamine metabolism; carnitine metabolism. Catalyzes the transfer of CoA to carnitine, generating the initial carnitinyl-CoA needed for the CaiB reaction cycle. Also has activity toward crotonobetaine and gamma-butyrobetaine. The chain is Crotonobetaine/carnitine--CoA ligase from Escherichia coli O45:K1 (strain S88 / ExPEC).